The sequence spans 393 residues: SH3 domain-binding protein 5-like (393 aa).

Residues 1–58 are disordered; that stretch reads MAELRQVPGGRETPQGELRPEVVEDEVPRSPVAEEPGGGGSSSSEAKLSPREEEELDP. Threonine 13 is subject to Phosphothreonine. Positions 18-28 are enriched in basic and acidic residues; it reads LRPEVVEDEVP. Phosphoserine occurs at positions 30 and 49. Coiled-coil stretches lie at residues 59 to 140 and 169 to 272; these read RIQE…YERA and WQEM…EQIH. A disordered region spans residues 273-332; the sequence is ARRRGGLPPHPLGPRRSSPVGAEAGPEDMEDGDSGIEGAEGAGLEEGSSLGPGPAPDTDT. The segment covering 297–306 has biased composition (acidic residues); sequence GPEDMEDGDS. The segment covering 317–332 has biased composition (low complexity); that stretch reads EEGSSLGPGPAPDTDT. Phosphoserine is present on residues serine 343, serine 350, serine 358, serine 362, and serine 378. A disordered region spans residues 362-393; the sequence is SLDGQELGTRSGGRRGSDGGARGGRHQRSVSL. The segment covering 384-393 has biased composition (basic residues); sequence GGRHQRSVSL.

Belongs to the SH3BP5 family.

In terms of biological role, functions as a guanine nucleotide exchange factor (GEF) for RAB11A. This is SH3 domain-binding protein 5-like (SH3BP5L) from Homo sapiens (Human).